We begin with the raw amino-acid sequence, 198 residues long: V-type ATP synthase subunit E (198 aa).

This sequence belongs to the V-ATPase E subunit family.

In terms of biological role, produces ATP from ADP in the presence of a proton gradient across the membrane. In Clostridium perfringens (strain SM101 / Type A), this protein is V-type ATP synthase subunit E.